Consider the following 121-residue polypeptide: Apoptin (121 aa).

2 disordered regions span residues 1-28 and 57-121; these read MNAL…LETP and LRSA…CIRL. Positions 58–70 are enriched in polar residues; that stretch reads RSATADNSESTGF. Basic and acidic residues predominate over residues 88–102; sequence RSCDPSEYRVSELKE.

This sequence belongs to the gyrovirus apoptin family.

The protein localises to the host nucleus. Its function is as follows. May act as transcriptional regulator. Induces apoptosis in infected cells. Element of infectious replication cycle. In Gallus gallus (Chicken), this protein is Apoptin (VP3).